Here is an 86-residue protein sequence, read N- to C-terminus: UPF0457 protein BCE33L2265 (86 aa).

The protein belongs to the UPF0457 family.

This chain is UPF0457 protein BCE33L2265, found in Bacillus cereus (strain ZK / E33L).